Consider the following 419-residue polypeptide: Gamma-glutamyl phosphate reductase (419 aa).

Belongs to the gamma-glutamyl phosphate reductase family.

The protein resides in the cytoplasm. The enzyme catalyses L-glutamate 5-semialdehyde + phosphate + NADP(+) = L-glutamyl 5-phosphate + NADPH + H(+). It participates in amino-acid biosynthesis; L-proline biosynthesis; L-glutamate 5-semialdehyde from L-glutamate: step 2/2. Catalyzes the NADPH-dependent reduction of L-glutamate 5-phosphate into L-glutamate 5-semialdehyde and phosphate. The product spontaneously undergoes cyclization to form 1-pyrroline-5-carboxylate. The chain is Gamma-glutamyl phosphate reductase from Solidesulfovibrio magneticus (strain ATCC 700980 / DSM 13731 / RS-1) (Desulfovibrio magneticus).